Reading from the N-terminus, the 306-residue chain is MSAVISLPDPQPRAARDPRVAEREQHKLAKRLRRQVGEAIADFGMIEAGDKVMVCLSGGKDSYTLLDVLLQLQKKAPVPFELVAVNLDQKQPDFPEHVLPEYLAGLGVPYHIIEQDTYSVVSRVIPEGKTMCSLCSRLRRGALYNYAETHGFTKIALGHHRDDMVATFFMNLFHHAKLSGMPPKLRSDDGKHVVIRPLAYVRESDIVDYAQARQFPIIPCNLCGSQENLQRRQVGLMLKQWEKDHPGRIEQIARAMGEVRPSQLADTTLFDFMALGRRDDAPLPDAHAWLAGSPADADADPETPTV.

The tract at residues M1–Q25 is disordered. The span at A14–Q25 shows a compositional bias: basic and acidic residues. Residues S57 to S62 carry the PP-loop motif motif. [4Fe-4S] cluster-binding residues include C132, C135, and C223. The tract at residues A286 to V306 is disordered. A compositionally biased stretch (acidic residues) spans A297–V306.

This sequence belongs to the TtcA family. As to quaternary structure, homodimer. It depends on Mg(2+) as a cofactor. The cofactor is [4Fe-4S] cluster.

The protein resides in the cytoplasm. It catalyses the reaction cytidine(32) in tRNA + S-sulfanyl-L-cysteinyl-[cysteine desulfurase] + AH2 + ATP = 2-thiocytidine(32) in tRNA + L-cysteinyl-[cysteine desulfurase] + A + AMP + diphosphate + H(+). The protein operates within tRNA modification. Its function is as follows. Catalyzes the ATP-dependent 2-thiolation of cytidine in position 32 of tRNA, to form 2-thiocytidine (s(2)C32). The sulfur atoms are provided by the cysteine/cysteine desulfurase (IscS) system. This chain is tRNA-cytidine(32) 2-sulfurtransferase, found in Stenotrophomonas maltophilia (strain K279a).